We begin with the raw amino-acid sequence, 124 residues long: Small ribosomal subunit protein uS12 (124 aa).

The tract at residues Met1–Ala26 is disordered. Asp89 is modified (3-methylthioaspartic acid). The segment at Thr104–Asp124 is disordered.

Belongs to the universal ribosomal protein uS12 family. Part of the 30S ribosomal subunit. Contacts proteins S8 and S17. May interact with IF1 in the 30S initiation complex.

With S4 and S5 plays an important role in translational accuracy. Its function is as follows. Interacts with and stabilizes bases of the 16S rRNA that are involved in tRNA selection in the A site and with the mRNA backbone. Located at the interface of the 30S and 50S subunits, it traverses the body of the 30S subunit contacting proteins on the other side and probably holding the rRNA structure together. The combined cluster of proteins S8, S12 and S17 appears to hold together the shoulder and platform of the 30S subunit. The polypeptide is Small ribosomal subunit protein uS12 (Prochlorococcus marinus (strain MIT 9215)).